Reading from the N-terminus, the 276-residue chain is ADP-dependent (S)-NAD(P)H-hydrate dehydratase (276 aa).

Residues 7–275 enclose the YjeF C-terminal domain; sequence TEEHVRATLP…DILPRVWKRF (269 aa). Residues alanine 42, glycine 104, and histidine 149 each coordinate (6S)-NADPHX. Residues 186 to 190 and glycine 215 contribute to the AMP site; that span reads KGNQT. Residue aspartate 216 coordinates (6S)-NADPHX.

It belongs to the NnrD/CARKD family. In terms of assembly, homotetramer. It depends on Mg(2+) as a cofactor.

The enzyme catalyses (6S)-NADHX + ADP = AMP + phosphate + NADH + H(+). It carries out the reaction (6S)-NADPHX + ADP = AMP + phosphate + NADPH + H(+). Its function is as follows. Catalyzes the dehydration of the S-form of NAD(P)HX at the expense of ADP, which is converted to AMP. Together with NAD(P)HX epimerase, which catalyzes the epimerization of the S- and R-forms, the enzyme allows the repair of both epimers of NAD(P)HX, a damaged form of NAD(P)H that is a result of enzymatic or heat-dependent hydration. This chain is ADP-dependent (S)-NAD(P)H-hydrate dehydratase, found in Bacillus subtilis (strain 168).